Here is a 135-residue protein sequence, read N- to C-terminus: uncharacterized protein (135 aa).

2 helical membrane-spanning segments follow: residues I20–L40 and I47–T67.

This sequence belongs to the plectrovirus ORF5 family.

It localises to the host membrane. This is an uncharacterized protein from Spiroplasma virus SpV1-C74 (SpV1).